The primary structure comprises 294 residues: 33 kDa chaperonin (294 aa).

2 disulfide bridges follow: Cys-238-Cys-240 and Cys-271-Cys-274.

Belongs to the HSP33 family. Post-translationally, under oxidizing conditions two disulfide bonds are formed involving the reactive cysteines. Under reducing conditions zinc is bound to the reactive cysteines and the protein is inactive.

It localises to the cytoplasm. Functionally, redox regulated molecular chaperone. Protects both thermally unfolding and oxidatively damaged proteins from irreversible aggregation. Plays an important role in the bacterial defense system toward oxidative stress. The protein is 33 kDa chaperonin of Caldanaerobacter subterraneus subsp. tengcongensis (strain DSM 15242 / JCM 11007 / NBRC 100824 / MB4) (Thermoanaerobacter tengcongensis).